A 293-amino-acid chain; its full sequence is Ethanolamine ammonia-lyase small subunit (293 aa).

Residues valine 207 and glutamate 228 each coordinate adenosylcob(III)alamin.

It belongs to the EutC family. As to quaternary structure, the basic unit is a heterodimer which dimerizes to form tetramers. The heterotetramers trimerize; 6 large subunits form a core ring with 6 small subunits projecting outwards. Adenosylcob(III)alamin is required as a cofactor.

It localises to the bacterial microcompartment. The enzyme catalyses ethanolamine = acetaldehyde + NH4(+). The protein operates within amine and polyamine degradation; ethanolamine degradation. Functionally, catalyzes the deamination of various vicinal amino-alcohols to oxo compounds. Allows this organism to utilize ethanolamine as the sole source of nitrogen and carbon in the presence of external vitamin B12. The chain is Ethanolamine ammonia-lyase small subunit from Clostridioides difficile (strain 630) (Peptoclostridium difficile).